Consider the following 157-residue polypeptide: Probable succinate transporter subunit YjjB (157 aa).

4 helical membrane-spanning segments follow: residues Ile-15 to Leu-35, Met-50 to Val-70, Val-87 to Ile-107, and Leu-121 to Val-141.

It belongs to the ThrE exporter (TC 2.A.79) family. The transporter is composed of YjjB and YjjP.

The protein localises to the cell inner membrane. Involved in succinate export with YjjP. Both proteins are required for export. This is Probable succinate transporter subunit YjjB from Shigella dysenteriae serotype 1 (strain Sd197).